The following is a 423-amino-acid chain: RNA polymerase sigma factor SigA (423 aa).

A disordered region spans residues 1–76; sequence MKKSKRKNAQ…EEDLPIPKIS (76 aa). Residues 21 to 70 show a composition bias toward acidic residues; it reads VQEEAEELPEFPEGEPDPDLEDPDLALEDDLLDLPEEGEGLDLEEEEEDL. Residues 78–113 form a sigma-70 factor domain-1 region; it reads SDPVRQYLHEIGQVPLLTLEEEVELARKVEEGMEAI. A sigma-70 factor domain-2 region spans residues 187-257; the sequence is LIEANLRLVV…NRAIADQART (71 aa). Residues 211–214 carry the Interaction with polymerase core subunit RpoC motif; the sequence is DLIQ. Residues 266-344 are sigma-70 factor domain-3; it reads ETINKLSRTA…DEHLPSPVDA (79 aa). The sigma-70 factor domain-4 stretch occupies residues 357 to 409; it reads ALSKLSEREAMVLKLRKGLIDGREHTLEEVGAFFGVTRERIRQIENKALRKLK. The segment at residues 383 to 402 is a DNA-binding region (H-T-H motif); the sequence is LEEVGAFFGVTRERIRQIEN.

The protein belongs to the sigma-70 factor family. RpoD/SigA subfamily. Interacts transiently with the RNA polymerase catalytic core formed by RpoA, RpoB, RpoC and RpoZ (2 alpha, 1 beta, 1 beta' and 1 omega subunit) to form the RNA polymerase holoenzyme that can initiate transcription.

The protein resides in the cytoplasm. In terms of biological role, sigma factors are initiation factors that promote the attachment of RNA polymerase to specific initiation sites and are then released. This sigma factor is the primary sigma factor during exponential growth. This Thermus thermophilus (strain ATCC BAA-163 / DSM 7039 / HB27) protein is RNA polymerase sigma factor SigA.